A 702-amino-acid chain; its full sequence is Polyribonucleotide nucleotidyltransferase (702 aa).

Positions 485 and 491 each coordinate Mg(2+). The KH domain occupies proline 552–isoleucine 611. The S1 motif domain occupies glycine 621–lysine 689.

It belongs to the polyribonucleotide nucleotidyltransferase family. Component of the RNA degradosome, which is a multiprotein complex involved in RNA processing and mRNA degradation. The cofactor is Mg(2+).

It is found in the cytoplasm. It catalyses the reaction RNA(n+1) + phosphate = RNA(n) + a ribonucleoside 5'-diphosphate. Its function is as follows. Involved in mRNA degradation. Catalyzes the phosphorolysis of single-stranded polyribonucleotides processively in the 3'- to 5'-direction. The polypeptide is Polyribonucleotide nucleotidyltransferase (Shewanella woodyi (strain ATCC 51908 / MS32)).